A 443-amino-acid polypeptide reads, in one-letter code: Ribosomal protein uS12 methylthiotransferase RimO (443 aa).

The 112-residue stretch at 5 to 116 (PTIAINHLGC…IVDIIRRTEQ (112 aa)) folds into the MTTase N-terminal domain. [4Fe-4S] cluster-binding residues include C14, C50, C79, C154, C158, and C161. The Radical SAM core domain maps to 140 to 369 (TTNEAIAYLR…MALQQPISAQ (230 aa)). A TRAM domain is found at 372 to 438 (AACLGQTLDV…DYDLYGMTAE (67 aa)).

The protein belongs to the methylthiotransferase family. RimO subfamily. [4Fe-4S] cluster is required as a cofactor.

It localises to the cytoplasm. The enzyme catalyses L-aspartate(89)-[ribosomal protein uS12]-hydrogen + (sulfur carrier)-SH + AH2 + 2 S-adenosyl-L-methionine = 3-methylsulfanyl-L-aspartate(89)-[ribosomal protein uS12]-hydrogen + (sulfur carrier)-H + 5'-deoxyadenosine + L-methionine + A + S-adenosyl-L-homocysteine + 2 H(+). Catalyzes the methylthiolation of an aspartic acid residue of ribosomal protein uS12. This is Ribosomal protein uS12 methylthiotransferase RimO from Synechocystis sp. (strain ATCC 27184 / PCC 6803 / Kazusa).